An 800-amino-acid polypeptide reads, in one-letter code: Phosphate transporter PHO1 homolog 9 (800 aa).

The 346-residue stretch at 1–346 (MKFGREFETQ…SRNASKPYLN (346 aa)) folds into the SPX domain. Residues 1–398 (MKFGREFETQ…KTKREKHRIT (398 aa)) are Cytoplasmic-facing. Disordered regions lie at residues 38-77 (QKQQ…PGLS), 91-119 (NRAS…HNHH), and 212-234 (PDLN…PAPS). Residues 42-51 (RPPPPPPPPS) show a composition bias toward pro residues. Residues 63-75 (GEGGGGGGGGGPG) show a composition bias toward gly residues. Residues 95–119 (RSPKKSHKHHNPLSSKRHHHHHNHH) are compositionally biased toward basic residues. The segment covering 216–229 (SVASAPSSPHSTMR) has biased composition (polar residues). Residues 399-419 (YFLGFFSGCAVALAIAITVLV) traverse the membrane as a helical segment. At 420 to 439 (HIRGLTKSEGRHQYMENIFP) the chain is on the extracellular side. The chain crosses the membrane as a helical span at residues 440–460 (LYSLFGFVAVHLFMYAADIYF). The Cytoplasmic segment spans residues 461–483 (WSRYRVNYPFIFGFEQGNDLGYR). The helical transmembrane segment at 484 to 504 (EVLLVGSGLAVLTFGGVISNL) threads the bilayer. Residues 505–520 (DMEMDPRTKSFSVITE) are Extracellular-facing. A helical transmembrane segment spans residues 521 to 541 (LVPLALLVCLMMVLFCPFNII). Over 542 to 670 (YRSSRYFFVG…IFEMKRGTYW (129 aa)) the chain is Cytoplasmic. The 195-residue stretch at 606–800 (YDSEIYKELY…FQELGGSKSV (195 aa)) folds into the EXS domain. The helical transmembrane segment at 671 to 691 (LTVAVTTSSIATLFNTYWDIF) threads the bilayer. At 692 to 718 (RDWGLMNRNSKNPWLRDKLLVPYKSIY) the chain is on the extracellular side. A helical transmembrane segment spans residues 719–739 (FIVMVANVVLRLAWMQTVLGI). Topologically, residues 740–800 (KEAPFLHKRA…FQELGGSKSV (61 aa)) are cytoplasmic.

Belongs to the SYG1 (TC 2.A.94) family. As to expression, specifically expressed in pollen grains.

The protein localises to the cell membrane. Its function is as follows. May transport inorganic phosphate (Pi). This Arabidopsis thaliana (Mouse-ear cress) protein is Phosphate transporter PHO1 homolog 9 (PHO1-H9).